Reading from the N-terminus, the 142-residue chain is Hemoglobin subunit alpha (142 aa).

The Globin domain occupies 2–142 (VLSADDKANI…VSTVLTSKYR (141 aa)). Phosphoserine is present on Ser4. Residues Lys8 and Lys12 each carry the N6-succinyllysine modification. The residue at position 17 (Lys17) is an N6-acetyllysine; alternate. Lys17 carries the post-translational modification N6-succinyllysine; alternate. The residue at position 25 (Tyr25) is a Phosphotyrosine. Ser36 is subject to Phosphoserine. At Lys41 the chain carries N6-succinyllysine. The residue at position 50 (Ser50) is a Phosphoserine. O2 is bound at residue His59. His88 contacts heme b. Phosphothreonine is present on Thr109. A phosphoserine mark is found at Ser125 and Ser132. Phosphothreonine occurs at positions 135 and 138. Position 139 is a phosphoserine (Ser139).

Belongs to the globin family. Heterotetramer of two alpha chains and two beta chains. As to expression, red blood cells.

Functionally, involved in oxygen transport from the lung to the various peripheral tissues. Hemopressin acts as an antagonist peptide of the cannabinoid receptor CNR1. Hemopressin-binding efficiently blocks cannabinoid receptor CNR1 and subsequent signaling. This is Hemoglobin subunit alpha (HBA) from Cricetomys gambianus (Northern giant pouched rat).